A 753-amino-acid chain; its full sequence is 5-methyltetrahydropteroyltriglutamate--homocysteine methyltransferase (753 aa).

Residues 17 to 20 (RELK) and lysine 117 each bind 5-methyltetrahydropteroyltri-L-glutamate. Residues 431-433 (IGS) and glutamate 484 contribute to the L-homocysteine site. L-methionine-binding positions include 431–433 (IGS) and glutamate 484. Residues 515–516 (RC) and tryptophan 561 contribute to the 5-methyltetrahydropteroyltri-L-glutamate site. Residue aspartate 599 participates in L-homocysteine binding. Aspartate 599 provides a ligand contact to L-methionine. Glutamate 605 is a binding site for 5-methyltetrahydropteroyltri-L-glutamate. Zn(2+)-binding residues include histidine 641, cysteine 643, and glutamate 665. The Proton donor role is filled by histidine 694. A Zn(2+)-binding site is contributed by cysteine 726.

It belongs to the vitamin-B12 independent methionine synthase family. Zn(2+) serves as cofactor.

The enzyme catalyses 5-methyltetrahydropteroyltri-L-glutamate + L-homocysteine = tetrahydropteroyltri-L-glutamate + L-methionine. It participates in amino-acid biosynthesis; L-methionine biosynthesis via de novo pathway; L-methionine from L-homocysteine (MetE route): step 1/1. In terms of biological role, catalyzes the transfer of a methyl group from 5-methyltetrahydrofolate to homocysteine resulting in methionine formation. The polypeptide is 5-methyltetrahydropteroyltriglutamate--homocysteine methyltransferase (Citrobacter koseri (strain ATCC BAA-895 / CDC 4225-83 / SGSC4696)).